The primary structure comprises 220 residues: ATP synthase subunit 5, mitochondrial (220 aa).

Belongs to the ATPase delta chain family. F-type ATPases have 2 components, CF(1) - the catalytic core - and CF(0) - the membrane proton channel. CF(1) has five subunits: alpha(3), beta(3), gamma(1), delta(1), epsilon(1). CF(0) has three main subunits: a, b and c.

It is found in the mitochondrion. Its subcellular location is the mitochondrion inner membrane. Functionally, mitochondrial membrane ATP synthase (F(1)F(0) ATP synthase or Complex V) produces ATP from ADP in the presence of a proton gradient across the membrane which is generated by electron transport complexes of the respiratory chain. F-type ATPases consist of two structural domains, F(1) - containing the extramembraneous catalytic core and F(0) - containing the membrane proton channel, linked together by a central stalk and a peripheral stalk. During catalysis, ATP synthesis in the catalytic domain of F(1) is coupled via a rotary mechanism of the central stalk subunits to proton translocation. Part of the complex F(0) domain and the peripheric stalk, which acts as a stator to hold the catalytic alpha(3)beta(3) subcomplex and subunit a/ATP6 static relative to the rotary elements. The chain is ATP synthase subunit 5, mitochondrial (atp-5) from Neurospora crassa (strain ATCC 24698 / 74-OR23-1A / CBS 708.71 / DSM 1257 / FGSC 987).